The chain runs to 206 residues: Emopamil-binding protein-like (206 aa).

4 helical membrane-spanning segments follow: residues 10 to 30 (EAGS…ALGL), 42 to 62 (WVLA…GAFV), 101 to 121 (LEIL…YAIV), and 165 to 185 (LWVY…LLLW). Residues 39–184 (VERWVLAWLC…LWVLIPGLLL (146 aa)) form the EXPERA domain.

Belongs to the EBP family. Homodimer.

The protein resides in the endoplasmic reticulum membrane. Functionally, does not possess sterol isomerase activity and does not bind sigma ligands. The sequence is that of Emopamil-binding protein-like (Ebpl) from Mus musculus (Mouse).